A 443-amino-acid chain; its full sequence is Tubulin beta-2 chain (443 aa).

The short motif at 1-4 (MREI) is the MREI motif element. GTP contacts are provided by Gln11, Glu69, Ser138, Gly142, Thr143, Gly144, Asn204, and Asn226. Glu69 lines the Mg(2+) pocket. Glu438 is subject to 5-glutamyl polyglutamate.

This sequence belongs to the tubulin family. In terms of assembly, dimer of alpha and beta chains. A typical microtubule is a hollow water-filled tube with an outer diameter of 25 nm and an inner diameter of 15 nM. Alpha-beta heterodimers associate head-to-tail to form protofilaments running lengthwise along the microtubule wall with the beta-tubulin subunit facing the microtubule plus end conferring a structural polarity. Microtubules usually have 13 protofilaments but different protofilament numbers can be found in some organisms and specialized cells. Mg(2+) is required as a cofactor. Some glutamate residues at the C-terminus are polyglycylated, resulting in polyglycine chains on the gamma-carboxyl group. Glycylation is mainly limited to tubulin incorporated into axonemes (cilia and flagella) whereas glutamylation is prevalent in neuronal cells, centrioles, axonemes, and the mitotic spindle. Both modifications can coexist on the same protein on adjacent residues, and lowering polyglycylation levels increases polyglutamylation, and reciprocally. The precise function of polyglycylation is still unclear. In terms of processing, some glutamate residues at the C-terminus are polyglutamylated, resulting in polyglutamate chains on the gamma-carboxyl group. Polyglutamylation plays a key role in microtubule severing by spastin (SPAST). SPAST preferentially recognizes and acts on microtubules decorated with short polyglutamate tails: severing activity by SPAST increases as the number of glutamates per tubulin rises from one to eight, but decreases beyond this glutamylation threshold. As to expression, nervous system specific.

It localises to the cytoplasm. It is found in the cytoskeleton. In terms of biological role, tubulin is the major constituent of microtubules, a cylinder consisting of laterally associated linear protofilaments composed of alpha- and beta-tubulin heterodimers. Microtubules grow by the addition of GTP-tubulin dimers to the microtubule end, where a stabilizing cap forms. Below the cap, tubulin dimers are in GDP-bound state, owing to GTPase activity of alpha-tubulin. This is Tubulin beta-2 chain (tubb2) from Xenopus laevis (African clawed frog).